The primary structure comprises 295 residues: Elongation factor Ts (295 aa).

Positions 79 to 82 (TDFV) are involved in Mg(2+) ion dislocation from EF-Tu.

Belongs to the EF-Ts family.

It is found in the cytoplasm. In terms of biological role, associates with the EF-Tu.GDP complex and induces the exchange of GDP to GTP. It remains bound to the aminoacyl-tRNA.EF-Tu.GTP complex up to the GTP hydrolysis stage on the ribosome. The protein is Elongation factor Ts of Bacillus cereus (strain B4264).